Here is a 641-residue protein sequence, read N- to C-terminus: Fructose-1,6-bisphosphatase class 3 (641 aa).

It belongs to the FBPase class 3 family. Requires Mn(2+) as cofactor.

The enzyme catalyses beta-D-fructose 1,6-bisphosphate + H2O = beta-D-fructose 6-phosphate + phosphate. It participates in carbohydrate biosynthesis; gluconeogenesis. This is Fructose-1,6-bisphosphatase class 3 from Bacillus velezensis (strain DSM 23117 / BGSC 10A6 / LMG 26770 / FZB42) (Bacillus amyloliquefaciens subsp. plantarum).